The chain runs to 245 residues: Adenylate kinase (245 aa).

Residue 15-20 participates in ATP binding; the sequence is GSGKGT. The segment at 35–64 is NMP; it reads SSGDLLRDAVSKDTPLSQEIKSYLDQGKLL. Residues serine 36, arginine 41, 62-64, 103-106, and glutamine 110 each bind AMP; these read KLL and GFPR. Residues 143 to 176 form an LID region; that stretch reads SRYICPACQGIYNEQQGFSSCPKCSVELIRRSDD. An ATP-binding site is contributed by arginine 144. Positions 147 and 150 each coordinate Zn(2+). An ATP-binding site is contributed by 153 to 154; sequence IY. Residues cysteine 163 and cysteine 166 each contribute to the Zn(2+) site. AMP contacts are provided by arginine 173 and arginine 184. An ATP-binding site is contributed by alanine 212.

It belongs to the adenylate kinase family. In terms of assembly, monomer.

The protein localises to the cytoplasm. It carries out the reaction AMP + ATP = 2 ADP. Its pathway is purine metabolism; AMP biosynthesis via salvage pathway; AMP from ADP: step 1/1. Functionally, catalyzes the reversible transfer of the terminal phosphate group between ATP and AMP. Plays an important role in cellular energy homeostasis and in adenine nucleotide metabolism. This is Adenylate kinase from Chlamydia trachomatis serovar A (strain ATCC VR-571B / DSM 19440 / HAR-13).